The sequence spans 94 residues: Co-chaperonin GroES (94 aa).

This sequence belongs to the GroES chaperonin family. Heptamer of 7 subunits arranged in a ring. Interacts with the chaperonin GroEL.

Its subcellular location is the cytoplasm. Together with the chaperonin GroEL, plays an essential role in assisting protein folding. The GroEL-GroES system forms a nano-cage that allows encapsulation of the non-native substrate proteins and provides a physical environment optimized to promote and accelerate protein folding. GroES binds to the apical surface of the GroEL ring, thereby capping the opening of the GroEL channel. The protein is Co-chaperonin GroES of Staphylococcus epidermidis.